Consider the following 205-residue polypeptide: Small ribosomal subunit protein uS4 (205 aa).

Basic and acidic residues predominate over residues 1–16; the sequence is MSKRETTKYKIDRRMG. The segment at 1-46 is disordered; it reads MSKRETTKYKIDRRMGENIWGRPKSPVNRRDYGPGQHGQRRKGKLS. The S4 RNA-binding domain maps to 94-157; it reads SRLDAVIYRA…KQLVLVLESV (64 aa).

It belongs to the universal ribosomal protein uS4 family. As to quaternary structure, part of the 30S ribosomal subunit. Contacts protein S5. The interaction surface between S4 and S5 is involved in control of translational fidelity.

One of the primary rRNA binding proteins, it binds directly to 16S rRNA where it nucleates assembly of the body of the 30S subunit. In terms of biological role, with S5 and S12 plays an important role in translational accuracy. The chain is Small ribosomal subunit protein uS4 from Bartonella quintana (strain Toulouse) (Rochalimaea quintana).